A 393-amino-acid polypeptide reads, in one-letter code: S-adenosylmethionine synthase 1 (393 aa).

Mg(2+) is bound at residue Glu9. An ATP-binding site is contributed by His15. Glu43 serves as a coordination point for K(+). 2 residues coordinate L-methionine: Glu56 and Gln99. Residues Asp167–Lys169, Ser235–Phe238, Asp246, Arg252–Lys253, Ala269, Lys273, and Lys277 each bind ATP. Asp246 provides a ligand contact to L-methionine. Residue Lys277 participates in L-methionine binding.

Belongs to the AdoMet synthase family. As to quaternary structure, homotetramer. Mn(2+) is required as a cofactor. Mg(2+) serves as cofactor. The cofactor is Co(2+). Requires K(+) as cofactor. As to expression, mostly expressed in stems.

The protein localises to the cytoplasm. It carries out the reaction L-methionine + ATP + H2O = S-adenosyl-L-methionine + phosphate + diphosphate. Its pathway is amino-acid biosynthesis; S-adenosyl-L-methionine biosynthesis; S-adenosyl-L-methionine from L-methionine: step 1/1. Catalyzes the formation of S-adenosylmethionine from methionine and ATP. The reaction comprises two steps that are both catalyzed by the same enzyme: formation of S-adenosylmethionine (AdoMet) and triphosphate, and subsequent hydrolysis of the triphosphate. This chain is S-adenosylmethionine synthase 1 (SAM1), found in Solanum lycopersicum (Tomato).